Here is a 133-residue protein sequence, read N- to C-terminus: Late embryogenesis abundant protein B19.3 (133 aa).

Residues 1–133 form a disordered region; the sequence is MASGQQERSE…IDESKFKTKS (133 aa). Basic and acidic residues-rich tracts occupy residues 7–19, 32–102, and 113–133; these read ERSE…REGE, EAQE…EMGR, and GGER…KTKS. Tandem repeats lie at residues 24-43, 44-63, and 64-83. The 3 X 20 AA tandem repeats stretch occupies residues 24-83; the sequence is GGTGGKTLEAQEHLAEGRSRGGQTRKDQLGEEGYREMGHKGGETRKEQLGEEGYREMGHK.

Belongs to the small hydrophilic plant seed protein family.

Functionally, lea proteins are late embryonic proteins abundant in higher plant seed embryos. This Hordeum vulgare (Barley) protein is Late embryogenesis abundant protein B19.3 (B19.3).